A 228-amino-acid chain; its full sequence is Sec-independent protein translocase protein TatB (228 aa).

Residues 1–21 (MFDFGLGELVFVGIIALIVLG) traverse the membrane as a helical segment. 2 disordered regions span residues 126–162 (LSDG…AETD) and 196–228 (VPHT…VRKS). Over residues 206-228 (AISRKRGLRPKHRAKPKLRVRKS) the composition is skewed to basic residues.

The protein belongs to the TatB family. As to quaternary structure, the Tat system comprises two distinct complexes: a TatABC complex, containing multiple copies of TatA, TatB and TatC subunits, and a separate TatA complex, containing only TatA subunits. Substrates initially bind to the TatABC complex, which probably triggers association of the separate TatA complex to form the active translocon.

It localises to the cell inner membrane. Part of the twin-arginine translocation (Tat) system that transports large folded proteins containing a characteristic twin-arginine motif in their signal peptide across membranes. Together with TatC, TatB is part of a receptor directly interacting with Tat signal peptides. TatB may form an oligomeric binding site that transiently accommodates folded Tat precursor proteins before their translocation. The protein is Sec-independent protein translocase protein TatB of Neisseria meningitidis serogroup C / serotype 2a (strain ATCC 700532 / DSM 15464 / FAM18).